Here is a 402-residue protein sequence, read N- to C-terminus: MMRSVDVYVKTLGPPVRSILYSIFTSQQKPSSLPSLPFHFSLRSSSNIPTRCFSNVVAKSNSPIYDFQGFRNLFTERAISSSTTTPVASAQPQQLQNQNQHPAEVDEEISMGLEDEAKLSIPVRAYFFSTSVDLRSLIEQNKQNFIPPTSRMTNYVVLKFGNHSDPTDTTRGRISGSESIYMVVFHYGSIVLFNVREHEVDEYLKVVERHASGLLPEMRKDEYEVRENPNLDTWMEVGRDFIRLQFLNTDGIRTIGCVLGQSIALDYYGRQVDGMVAEFTEINRQLEITGTFTMKRKKLFQLVGKANVILADVILKLGLFERSDIAWKDAKYGQIWEFLRDEFELTQSFANLDYKLKFVEHNVRFLQEILQNRKSATLEWLIIILISMEIAISFYNMSRASL.

Residues 375–395 (SATLEWLIIILISMEIAISFY) form a helical membrane-spanning segment.

This sequence belongs to the RMD1/sif2 family. Highly expressed in germinating seeds and developing seedlings. Also present at low levels in seedlings, roots, leaves, stems and flowers, and barely in siliques.

It is found in the mitochondrion membrane. The protein resides in the mitochondrion. Mediates abscisic acid (ABA) signal transduction through mitochondrial retrograde regulation involving ABI4 during seed germination and seedling growth, and leading to the production of reactive oxygen species (ROS) by the alternative respiratory pathway. Required for the maintenance of mitochondrial structure. This is Protein RETARDED ROOT GROWTH-LIKE from Arabidopsis thaliana (Mouse-ear cress).